The primary structure comprises 391 residues: 3-ketoacyl-CoA thiolase (391 aa).

Residue cysteine 95 is the Acyl-thioester intermediate of the active site. Catalysis depends on proton acceptor residues histidine 347 and cysteine 377.

The protein belongs to the thiolase-like superfamily. Thiolase family. As to quaternary structure, heterotetramer of two alpha chains (FadB) and two beta chains (FadA).

The protein localises to the cytoplasm. The enzyme catalyses an acyl-CoA + acetyl-CoA = a 3-oxoacyl-CoA + CoA. It participates in lipid metabolism; fatty acid beta-oxidation. Catalyzes the final step of fatty acid oxidation in which acetyl-CoA is released and the CoA ester of a fatty acid two carbons shorter is formed. In Marinobacter nauticus (strain ATCC 700491 / DSM 11845 / VT8) (Marinobacter aquaeolei), this protein is 3-ketoacyl-CoA thiolase.